A 327-amino-acid polypeptide reads, in one-letter code: ATPase ASNA1 homolog (327 aa).

26 to 33 provides a ligand contact to ATP; sequence KGGVGKTT. D57 is an active-site residue. E238 and N265 together coordinate ATP. Zn(2+) contacts are provided by C274 and C277.

The protein belongs to the arsA ATPase family. Homodimer.

The protein resides in the cytoplasm. Its subcellular location is the endoplasmic reticulum. ATPase required for the post-translational delivery of tail-anchored (TA) proteins to the endoplasmic reticulum. Recognizes and selectively binds the transmembrane domain of TA proteins in the cytosol. This complex then targets to the endoplasmic reticulum by membrane-bound receptors, where the tail-anchored protein is released for insertion. This process is regulated by ATP binding and hydrolysis. ATP binding drives the homodimer towards the closed dimer state, facilitating recognition of newly synthesized TA membrane proteins. ATP hydrolysis is required for insertion. Subsequently, the homodimer reverts towards the open dimer state, lowering its affinity for the membrane-bound receptor, and returning it to the cytosol to initiate a new round of targeting. The polypeptide is ATPase ASNA1 homolog (Entamoeba histolytica (strain ATCC 30459 / HM-1:IMSS / ABRM)).